The sequence spans 436 residues: tRNA (guanine(37)-N(1))-methyltransferase 1 (436 aa).

S-adenosyl-L-methionine contacts are provided by residues His-229, 277–278 (DL), and Asn-325.

It belongs to the class I-like SAM-binding methyltransferase superfamily. TRM5/TYW2 family. In terms of assembly, monomer.

Its subcellular location is the mitochondrion matrix. The protein localises to the nucleus. It is found in the cytoplasm. It carries out the reaction guanosine(37) in tRNA + S-adenosyl-L-methionine = N(1)-methylguanosine(37) in tRNA + S-adenosyl-L-homocysteine + H(+). Specifically methylates the N1 position of guanosine-37 in various cytoplasmic and mitochondrial tRNAs. Methylation is not dependent on the nature of the nucleoside 5' of the target nucleoside. This is the first step in the biosynthesis of wybutosine (yW), a modified base adjacent to the anticodon of tRNAs and required for accurate decoding. In Phaeodactylum tricornutum (strain CCAP 1055/1), this protein is tRNA (guanine(37)-N(1))-methyltransferase 1.